Consider the following 310-residue polypeptide: Protoheme IX farnesyltransferase 2 (310 aa).

Transmembrane regions (helical) follow at residues 21-41 (IWYL…GIYG), 46-66 (IATW…ANVL), 99-119 (FGLF…LTTT), 125-145 (WAAA…SYML), 153-173 (IVLG…AVTT), 180-200 (GLVM…ALTL), 226-246 (VIAV…LITL), 256-276 (VYLA…AWVV), and 284-304 (AWVL…ALMV).

This sequence belongs to the UbiA prenyltransferase family. Protoheme IX farnesyltransferase subfamily.

It is found in the cell membrane. The enzyme catalyses heme b + (2E,6E)-farnesyl diphosphate + H2O = Fe(II)-heme o + diphosphate. It functions in the pathway porphyrin-containing compound metabolism; heme O biosynthesis; heme O from protoheme: step 1/1. Its function is as follows. Converts heme B (protoheme IX) to heme O by substitution of the vinyl group on carbon 2 of heme B porphyrin ring with a hydroxyethyl farnesyl side group. The sequence is that of Protoheme IX farnesyltransferase 2 from Cenarchaeum symbiosum (strain A).